The following is a 368-amino-acid chain: DNA replication and repair protein RecF (368 aa).

30–37 (GRNGQGKT) is an ATP binding site.

It belongs to the RecF family.

It localises to the cytoplasm. Functionally, the RecF protein is involved in DNA metabolism; it is required for DNA replication and normal SOS inducibility. RecF binds preferentially to single-stranded, linear DNA. It also seems to bind ATP. The polypeptide is DNA replication and repair protein RecF (Trichlorobacter lovleyi (strain ATCC BAA-1151 / DSM 17278 / SZ) (Geobacter lovleyi)).